The sequence spans 371 residues: Bifunctional enzyme IspD/IspF (371 aa).

The segment at Met-1–Ile-210 is 2-C-methyl-D-erythritol 4-phosphate cytidylyltransferase. The interval Phe-211–Leu-371 is 2-C-methyl-D-erythritol 2,4-cyclodiphosphate synthase. A divalent metal cation is bound by residues Asp-217 and His-219. 4-CDP-2-C-methyl-D-erythritol 2-phosphate is bound by residues Asp-217 to His-219 and His-243 to Ser-244. His-251 is an a divalent metal cation binding site. Residues Asp-265–Gly-267, Tyr-270–Asp-274, Ala-309–Lys-315, Thr-341–Glu-344, Phe-348, and Arg-351 contribute to the 4-CDP-2-C-methyl-D-erythritol 2-phosphate site.

This sequence in the N-terminal section; belongs to the IspD/TarI cytidylyltransferase family. IspD subfamily. The protein in the C-terminal section; belongs to the IspF family. It depends on a divalent metal cation as a cofactor.

It catalyses the reaction 2-C-methyl-D-erythritol 4-phosphate + CTP + H(+) = 4-CDP-2-C-methyl-D-erythritol + diphosphate. The enzyme catalyses 4-CDP-2-C-methyl-D-erythritol 2-phosphate = 2-C-methyl-D-erythritol 2,4-cyclic diphosphate + CMP. It functions in the pathway isoprenoid biosynthesis; isopentenyl diphosphate biosynthesis via DXP pathway; isopentenyl diphosphate from 1-deoxy-D-xylulose 5-phosphate: step 2/6. The protein operates within isoprenoid biosynthesis; isopentenyl diphosphate biosynthesis via DXP pathway; isopentenyl diphosphate from 1-deoxy-D-xylulose 5-phosphate: step 4/6. Bifunctional enzyme that catalyzes the formation of 4-diphosphocytidyl-2-C-methyl-D-erythritol from CTP and 2-C-methyl-D-erythritol 4-phosphate (MEP) (IspD), and catalyzes the conversion of 4-diphosphocytidyl-2-C-methyl-D-erythritol 2-phosphate (CDP-ME2P) to 2-C-methyl-D-erythritol 2,4-cyclodiphosphate (ME-CPP) with a corresponding release of cytidine 5-monophosphate (CMP) (IspF). In Campylobacter jejuni subsp. jejuni serotype O:2 (strain ATCC 700819 / NCTC 11168), this protein is Bifunctional enzyme IspD/IspF.